A 259-amino-acid polypeptide reads, in one-letter code: MLPTTSVSPRSPDNGILSPRDATRHTAGAKRYKYLRRLFHFKQMDFEFALWQMLYLFTSPQKVYRNFHYRKQTKDQWARDDPAFLVLLGIWLCVSTVGFGFVLDMSFFETFTLLLWVVFIDCVGVGLLIATSMWFVSNKYMVNRQGKDYDVEWGYTFDVHLNAFYPLLVILHFIQLFFINHVILTGWFIGCFVGNTLWLIAIGYYIYITFLGYSALPFLKNTVVLLYPFAALALLYILSLALGWNFTAKLCLFYKYRVR.

Residues 1–11 (MLPTTSVSPRS) show a composition bias toward polar residues. A disordered region spans residues 1 to 21 (MLPTTSVSPRSPDNGILSPRD). At 1-82 (MLPTTSVSPR…TKDQWARDDP (82 aa)) the chain is on the cytoplasmic side. A helical membrane pass occupies residues 83 to 103 (AFLVLLGIWLCVSTVGFGFVL). The Lumenal segment spans residues 104–109 (DMSFFE). Residues 110–130 (TFTLLLWVVFIDCVGVGLLIA) form a helical membrane-spanning segment. The Cytoplasmic segment spans residues 131-158 (TSMWFVSNKYMVNRQGKDYDVEWGYTFD). A helical membrane pass occupies residues 159–179 (VHLNAFYPLLVILHFIQLFFI). Topologically, residues 180 to 181 (NH) are lumenal. The helical transmembrane segment at 182 to 202 (VILTGWFIGCFVGNTLWLIAI) threads the bilayer. The Cytoplasmic segment spans residues 203 to 222 (GYYIYITFLGYSALPFLKNT). Residues 223-243 (VVLLYPFAALALLYILSLALG) form a helical membrane-spanning segment. The Lumenal segment spans residues 244 to 259 (WNFTAKLCLFYKYRVR).

This sequence belongs to the unc-50 family.

Its subcellular location is the nucleus inner membrane. The protein resides in the golgi apparatus membrane. Involved in the cell surface expression of neuronal nicotinic receptors. Binds RNA. The chain is Protein unc-50 homolog B (unc50-b) from Xenopus laevis (African clawed frog).